The primary structure comprises 235 residues: 7-cyano-7-deazaguanine synthase (235 aa).

12 to 22 contributes to the ATP binding site; that stretch reads FSGGQDSTTCL. 4 residues coordinate Zn(2+): Cys200, Cys215, Cys218, and Cys221.

The protein belongs to the QueC family. Requires Zn(2+) as cofactor.

It catalyses the reaction 7-carboxy-7-deazaguanine + NH4(+) + ATP = 7-cyano-7-deazaguanine + ADP + phosphate + H2O + H(+). It participates in purine metabolism; 7-cyano-7-deazaguanine biosynthesis. In terms of biological role, catalyzes the ATP-dependent conversion of 7-carboxy-7-deazaguanine (CDG) to 7-cyano-7-deazaguanine (preQ(0)). The protein is 7-cyano-7-deazaguanine synthase of Leptothrix cholodnii (strain ATCC 51168 / LMG 8142 / SP-6) (Leptothrix discophora (strain SP-6)).